A 907-amino-acid chain; its full sequence is Phototropin-2 (907 aa).

The tract at residues 28-84 (ATAGLEIVAEDAPSGSSGAHQQQAWRPVAPATAGRDSGGTGSGKSSVDGGVGRASHD) is disordered. The segment covering 41-51 (SGSSGAHQQQA) has biased composition (polar residues). The PAS 1 domain occupies 89 to 162 (VSQELKDALS…AKIRDAVKHG (74 aa)). Residues 138 to 143 (NCRFLQ), R156, N171, N181, and Q202 contribute to the FMN site. Position 139 is an S-4a-FMN cysteine (C139). One can recognise a PAC 1 domain in the interval 163-217 (RSFCGRLLNYRKDGAPFWNLLTVTPIRDDNGKVIKFIGMQVEVSKYTEGLSDKRM). Residues 332–363 (RSSVGSREAPAVVEEPAPAPPPAPEVVERTDS) form a disordered region. One can recognise a PAS 2 domain in the interval 375-448 (QGIDLATTLE…DKIREAIREQ (74 aa)). Residues 424–429 (NCRFLQ), R442, N457, N467, and Q488 each bind FMN. The residue at position 425 (C425) is an S-4a-FMN cysteine. The region spanning 449–503 (KEITVQLINYTKSGKKFWNLFHLQPMRDQKGELQYFIGVQLDGSDHVEPLRNRLS) is the PAC 2 domain. The region spanning 576-863 (FKPVKPLGCG…ANDIKQHSFF (288 aa)) is the Protein kinase domain. ATP-binding positions include 582 to 590 (LGCGDTGSV) and K605. D701 (proton acceptor) is an active-site residue.

The protein belongs to the protein kinase superfamily. Ser/Thr protein kinase family. As to quaternary structure, homodimer. It depends on FMN as a cofactor. In terms of processing, autophosphorylated in response to blue light irradiation. Post-translationally, 2 molecules of FMN bind covalently to cysteines after exposure to blue light and are reversed in the dark. In terms of tissue distribution, expressed at low levels in leaves of dark-grown seedlings.

It carries out the reaction L-seryl-[protein] + ATP = O-phospho-L-seryl-[protein] + ADP + H(+). It catalyses the reaction L-threonyl-[protein] + ATP = O-phospho-L-threonyl-[protein] + ADP + H(+). Protein kinase that acts as a blue light photoreceptor in a signal-transduction pathway for phototropic responses. Regulates a wide range of physiological activities in plants that maximize the efficiency of photosynthesis, such as chloroplast relocations, stomata opening, and leaf expansion. This Oryza sativa subsp. japonica (Rice) protein is Phototropin-2 (PHOT2).